We begin with the raw amino-acid sequence, 284 residues long: 4-hydroxybenzoate octaprenyltransferase (284 aa).

Helical transmembrane passes span 16–36 (PIGILLLLWPTLWALWMASDG), 40–60 (WTLVAIFTLGTVLMRSAGCAV), 91–111 (LLVALVLTLLAFALIWPLNTL), 132–152 (FFAIPQAYLGIAFGFGIPMGF), 157–177 (NTVPAAAWWLLVANVFWSVAY), 207–227 (AIIMFCYAMTLGIIGIVGWQF), 231–251 (IWFVAGLLLAAVCAAYHYTLI), and 259–279 (CFAAFNHNNWLGGAIFGGVAL).

This sequence belongs to the UbiA prenyltransferase family. It depends on Mg(2+) as a cofactor.

It localises to the cell inner membrane. The enzyme catalyses all-trans-octaprenyl diphosphate + 4-hydroxybenzoate = 4-hydroxy-3-(all-trans-octaprenyl)benzoate + diphosphate. It participates in cofactor biosynthesis; ubiquinone biosynthesis. Its function is as follows. Catalyzes the prenylation of para-hydroxybenzoate (PHB) with an all-trans polyprenyl group. Mediates the second step in the final reaction sequence of ubiquinone-8 (UQ-8) biosynthesis, which is the condensation of the polyisoprenoid side chain with PHB, generating the first membrane-bound Q intermediate 3-octaprenyl-4-hydroxybenzoate. The protein is 4-hydroxybenzoate octaprenyltransferase of Janthinobacterium sp. (strain Marseille) (Minibacterium massiliensis).